Reading from the N-terminus, the 530-residue chain is V(D)J recombination-activating protein 2 (530 aa).

A PHD-type; atypical zinc finger spans residues 416 to 485 (WIKCCLSCQV…KYFCLDHGGL (70 aa)). Residues cysteine 419, cysteine 423, cysteine 446, histidine 453, histidine 456, cysteine 459, cysteine 479, and histidine 482 each coordinate Zn(2+).

The protein belongs to the RAG2 family. In terms of assembly, component of the RAG complex composed of core components rag1 and rag2.

It is found in the nucleus. Its function is as follows. Core component of the RAG complex, a multiprotein complex that mediates the DNA cleavage phase during V(D)J recombination. V(D)J recombination assembles a diverse repertoire of immunoglobulin and T-cell receptor genes in developing B and T lymphocytes through rearrangement of different V (variable), in some cases D (diversity), and J (joining) gene segments. DNA cleavage by the RAG complex occurs in 2 steps: a first nick is introduced in the top strand immediately upstream of the heptamer, generating a 3'-hydroxyl group that can attack the phosphodiester bond on the opposite strand in a direct transesterification reaction, thereby creating 4 DNA ends: 2 hairpin coding ends and 2 blunt, 5'-phosphorylated ends. In the RAG complex, rag2 is not the catalytic component but is required for all known catalytic activities mediated by RAG1. It probably acts as a sensor of chromatin state that recruits the RAG complex to H3K4me3. This chain is V(D)J recombination-activating protein 2 (rag2), found in Danio rerio (Zebrafish).